We begin with the raw amino-acid sequence, 66 residues long: MPKMKTHRGGAKRVKRTGSGKLKRSRAYTSHLFANKSTKQKRGLRKASLVSKGDQKRVAQMLTYVK.

The segment covering 1 to 26 (MPKMKTHRGGAKRVKRTGSGKLKRSR) has biased composition (basic residues). 2 disordered regions span residues 1 to 28 (MPKM…SRAY) and 36 to 55 (KSTK…KGDQ).

It belongs to the bacterial ribosomal protein bL35 family.

The protein is Large ribosomal subunit protein bL35 of Macrococcus caseolyticus (strain JCSC5402) (Macrococcoides caseolyticum).